The chain runs to 945 residues: Valine--tRNA ligase (945 aa).

Residues 42–52 carry the 'HIGH' region motif; it reads PNVTGTLHMGH. The short motif at 552–556 is the 'KMSKS' region element; sequence KMSKS. Position 555 (K555) interacts with ATP. Positions 879–945 form a coiled coil; sequence DKAAETARLS…VQNQLAKLKD (67 aa).

This sequence belongs to the class-I aminoacyl-tRNA synthetase family. ValS type 1 subfamily. As to quaternary structure, monomer.

It is found in the cytoplasm. The enzyme catalyses tRNA(Val) + L-valine + ATP = L-valyl-tRNA(Val) + AMP + diphosphate. Functionally, catalyzes the attachment of valine to tRNA(Val). As ValRS can inadvertently accommodate and process structurally similar amino acids such as threonine, to avoid such errors, it has a 'posttransfer' editing activity that hydrolyzes mischarged Thr-tRNA(Val) in a tRNA-dependent manner. The protein is Valine--tRNA ligase of Neisseria meningitidis serogroup B (strain ATCC BAA-335 / MC58).